The primary structure comprises 87 residues: Large ribosomal subunit protein bL27 (87 aa).

The tract at residues 1–22 (MAHKKAGGSSRNGRDSQGQRRG) is disordered.

The protein belongs to the bacterial ribosomal protein bL27 family.

This Nitratidesulfovibrio vulgaris (strain DP4) (Desulfovibrio vulgaris) protein is Large ribosomal subunit protein bL27.